Reading from the N-terminus, the 407-residue chain is 3-oxoacyl-[acyl-carrier-protein] synthase 1 (407 aa).

The Ketosynthase family 3 (KS3) domain maps to 1–405 (MKRVVITGLG…GTNVSLIIKK (405 aa)). Catalysis depends on for beta-ketoacyl synthase activity residues C164, H299, and H335.

It belongs to the thiolase-like superfamily. Beta-ketoacyl-ACP synthases family. In terms of assembly, homodimer.

The protein localises to the cytoplasm. The enzyme catalyses a fatty acyl-[ACP] + malonyl-[ACP] + H(+) = a 3-oxoacyl-[ACP] + holo-[ACP] + CO2. It carries out the reaction (3Z)-decenoyl-[ACP] + malonyl-[ACP] + H(+) = 3-oxo-(5Z)-dodecenoyl-[ACP] + holo-[ACP] + CO2. The protein operates within lipid metabolism; fatty acid biosynthesis. Functionally, involved in the type II fatty acid elongation cycle. Catalyzes the elongation of a wide range of acyl-ACP by the addition of two carbons from malonyl-ACP to an acyl acceptor. Can also use unsaturated fatty acids. Catalyzes a key reaction in unsaturated fatty acid (UFA) synthesis, the elongation of the cis-3-decenoyl-ACP produced by FabA. In Buchnera aphidicola subsp. Baizongia pistaciae (strain Bp), this protein is 3-oxoacyl-[acyl-carrier-protein] synthase 1 (fabB).